The following is a 467-amino-acid chain: ADP-dependent glucose/glucosamine kinase (467 aa).

An ADPK domain is found at 10–467; that stretch reads RLWKRLYVNA…FVSEFGMRKR (458 aa). Residues Asp-42, Glu-96, Gly-120, 120-121, His-184, and Asp-211 contribute to the D-glucose site; that span reads GQ. Glu-279 provides a ligand contact to Mg(2+). Asn-305 contributes to the ADP binding site. Glu-308 is a Mg(2+) binding site. ADP is bound by residues 352 to 353, Val-440, and Gly-450; that span reads HT. Asp-451 contacts D-glucose. Asp-451 is a binding site for Mg(2+). The active-site Proton acceptor is Asp-451.

This sequence belongs to the ADP-dependent glucokinase family. In terms of assembly, monomer. Mg(2+) is required as a cofactor.

The protein resides in the cytoplasm. It catalyses the reaction D-glucose + ADP = D-glucose 6-phosphate + AMP + H(+). It carries out the reaction D-glucosamine + ADP = D-glucosamine 6-phosphate + AMP + H(+). It functions in the pathway carbohydrate degradation; glycolysis. Catalyzes the ADP-dependent phosphorylation of D-glucose to D-glucose 6-phosphate and glucosamine to glucosamine 6-phosphate. Can also use CDP as the phosphoryl group donor and D-1,5-anhydroglucitol as the phosphoryl group acceptor. The chain is ADP-dependent glucose/glucosamine kinase from Thermococcus litoralis (strain ATCC 51850 / DSM 5473 / JCM 8560 / NS-C).